Consider the following 548-residue polypeptide: Membrane protein insertase YidC (548 aa).

A helical transmembrane segment spans residues 6–26 (NLLVIALLFVSFMIWQAWEQD). The tract at residues 28–56 (NPQPQTQQTTQTTTTAAGSAADQGVPASG) is disordered. A compositionally biased stretch (low complexity) spans 29–42 (PQPQTQQTTQTTTT). The next 4 helical transmembrane spans lie at 350 to 370 (FVGN…GIMY), 424 to 444 (FPLI…MGSI), 458 to 478 (LSAQ…MFFI), and 499 to 519 (PVIF…YYIV).

Belongs to the OXA1/ALB3/YidC family. Type 1 subfamily. As to quaternary structure, interacts with the Sec translocase complex via SecD. Specifically interacts with transmembrane segments of nascent integral membrane proteins during membrane integration.

The protein localises to the cell inner membrane. Required for the insertion and/or proper folding and/or complex formation of integral membrane proteins into the membrane. Involved in integration of membrane proteins that insert both dependently and independently of the Sec translocase complex, as well as at least some lipoproteins. Aids folding of multispanning membrane proteins. The sequence is that of Membrane protein insertase YidC from Salmonella heidelberg (strain SL476).